The following is a 420-amino-acid chain: D-tagatose-1,6-bisphosphate aldolase subunit GatZ (420 aa).

This sequence belongs to the GatZ/KbaZ family. GatZ subfamily. Forms a complex with GatY.

It functions in the pathway carbohydrate metabolism; D-tagatose 6-phosphate degradation; D-glyceraldehyde 3-phosphate and glycerone phosphate from D-tagatose 6-phosphate: step 2/2. Its function is as follows. Component of the tagatose-1,6-bisphosphate aldolase GatYZ that is required for full activity and stability of the Y subunit. Could have a chaperone-like function for the proper and stable folding of GatY. When expressed alone, GatZ does not show any aldolase activity. Is involved in the catabolism of galactitol. This Shigella flexneri serotype 5b (strain 8401) protein is D-tagatose-1,6-bisphosphate aldolase subunit GatZ.